Reading from the N-terminus, the 790-residue chain is N-methylputrescine oxidase 1, peroxisomal (790 aa).

The disordered stretch occupies residues 1 to 23; sequence MATTKQKVTAPSPSPSSSTASCC. Residues 9–23 show a composition bias toward low complexity; the sequence is TAPSPSPSSSTASCC. 423–434 is a substrate binding site; sequence AFDAGEDGLGKN. Asp425 (proton acceptor) is an active-site residue. A disulfide bridge links Cys444 with Cys470. A substrate-binding site is contributed by 506–511; it reads VANYEY. Tyr509 (schiff-base intermediate with substrate; via topaquinone) is an active-site residue. Position 509 is a 2',4',5'-topaquinone (Tyr509). The Cu cation site is built by His559 and His561. The Mn(2+) site is built by Asp714 and Ile715. Residue His725 coordinates Cu cation.

It belongs to the copper/topaquinone oxidase family. In terms of assembly, homodimer. Cu cation is required as a cofactor. It depends on Zn(2+) as a cofactor. The cofactor is L-topaquinone. Topaquinone (TPQ) is generated by copper-dependent autoxidation of a specific tyrosyl residue. Mainly expressed in roots, and, to a lower extent, in stems.

Its subcellular location is the peroxisome. It carries out the reaction a primary methyl amine + O2 + H2O = an aldehyde + H2O2 + NH4(+). The catalysed reaction is N-methylputrescine + O2 + H2O = 4-methylaminobutanal + H2O2 + NH4(+). Its pathway is alkaloid biosynthesis; nicotine biosynthesis. In terms of biological role, involved in the biosynthesis of pyridine alkaloid natural products, leading mainly to the production of anabasine, anatabine, nicotine and nornicotine, effective deterrents against herbivores with antiparasitic and pesticide properties (neurotoxins); nornicotine serves as the precursor in the synthesis of the carcinogen compound N'-nitrosonornicotine (NNN). Amine oxidase which mediates the deamination of N-methylputrescine to produce 4-methylaminobutanal. Oxidizes preferentially N-methylated amines. This Nicotiana tabacum (Common tobacco) protein is N-methylputrescine oxidase 1, peroxisomal.